The chain runs to 276 residues: Rhomboid protease GlpG (276 aa).

6 helical membrane-spanning segments follow: residues 94 to 114 (GPFTWAILLICIAVFILQNLL), 142 to 162 (AFMHFSLMHILFNLLWWWYLG), 169 to 189 (IGSGKLVVITVISALLSGFVQ), 192 to 212 (FSGPWFGGLSGVVYALMGYVW), 229 to 249 (LILFSLVWLIAGWFDVFGMAI), and 252 to 272 (GAHVAGLATGLAMAFVDTLHG). Catalysis depends on Ser201, which acts as the Nucleophile. His254 is an active-site residue.

The protein belongs to the peptidase S54 family.

It is found in the cell inner membrane. It carries out the reaction Cleaves type-1 transmembrane domains using a catalytic dyad composed of serine and histidine that are contributed by different transmembrane domains.. In terms of biological role, rhomboid-type serine protease that catalyzes intramembrane proteolysis. This is Rhomboid protease GlpG from Klebsiella pneumoniae subsp. pneumoniae (strain ATCC 700721 / MGH 78578).